Consider the following 547-residue polypeptide: Flagellar hook-associated protein 1 (547 aa).

Belongs to the flagella basal body rod proteins family.

It localises to the secreted. Its subcellular location is the bacterial flagellum. The polypeptide is Flagellar hook-associated protein 1 (flgK) (Escherichia coli (strain K12)).